The sequence spans 161 residues: Large ribosomal subunit protein uL15 (161 aa).

Positions 1-10 are enriched in basic and acidic residues; the sequence is MKLNELRDNP. Residues 1-42 form a disordered region; it reads MKLNELRDNPGARPKSKRLGRGIGSGKGKTSGKGVKGQKARE. A compositionally biased stretch (gly residues) spans 21 to 35; it reads RGIGSGKGKTSGKGV.

This sequence belongs to the universal ribosomal protein uL15 family. In terms of assembly, part of the 50S ribosomal subunit.

Binds to the 23S rRNA. The protein is Large ribosomal subunit protein uL15 of Acidiphilium cryptum (strain JF-5).